Here is a 494-residue protein sequence, read N- to C-terminus: NADH-ubiquinone oxidoreductase chain 4 (494 aa).

Helical transmembrane passes span 6–26 (IMIY…LLIY), 41–61 (TIGL…FILF), 87–107 (IDGI…ISLV), 118–138 (VLSF…VFLV), 141–161 (ILLF…LIGL), 172–192 (FYLF…IITM), 207–227 (ANFS…SFAV), 246–266 (PLAG…YGIF), 280–300 (YTYI…FSTL), 302–322 (TIAI…VYLL), 336–356 (IALG…VGGI), 375–395 (LMPI…GSPL), 415–435 (VLGV…IFMF), and 460–480 (FILL…PAVI).

This sequence belongs to the complex I subunit 4 family.

It is found in the mitochondrion membrane. The enzyme catalyses a ubiquinone + NADH + 5 H(+)(in) = a ubiquinol + NAD(+) + 4 H(+)(out). Core subunit of the mitochondrial membrane respiratory chain NADH dehydrogenase (Complex I) that is believed to belong to the minimal assembly required for catalysis. Complex I functions in the transfer of electrons from NADH to the respiratory chain. The immediate electron acceptor for the enzyme is believed to be ubiquinone. In Trichophyton rubrum (Athlete's foot fungus), this protein is NADH-ubiquinone oxidoreductase chain 4 (ND4).